A 496-amino-acid polypeptide reads, in one-letter code: tRNA-2-methylthio-N(6)-dimethylallyladenosine synthase (496 aa).

The MTTase N-terminal domain occupies 43–160 (KKVFVTTQGC…LPELYDQSHQ (118 aa)). [4Fe-4S] cluster-binding residues include cysteine 52, cysteine 89, cysteine 123, cysteine 204, cysteine 208, and cysteine 211. Residues 190–422 (RVEGFKAFVS…QKVIIDSTLA (233 aa)) enclose the Radical SAM core domain. The 69-residue stretch at 425–493 (HEMVGTTTRV…PHMVKGEIEA (69 aa)) folds into the TRAM domain.

It belongs to the methylthiotransferase family. MiaB subfamily. Monomer. [4Fe-4S] cluster serves as cofactor.

It is found in the cytoplasm. The enzyme catalyses N(6)-dimethylallyladenosine(37) in tRNA + (sulfur carrier)-SH + AH2 + 2 S-adenosyl-L-methionine = 2-methylsulfanyl-N(6)-dimethylallyladenosine(37) in tRNA + (sulfur carrier)-H + 5'-deoxyadenosine + L-methionine + A + S-adenosyl-L-homocysteine + 2 H(+). Its function is as follows. Catalyzes the methylthiolation of N6-(dimethylallyl)adenosine (i(6)A), leading to the formation of 2-methylthio-N6-(dimethylallyl)adenosine (ms(2)i(6)A) at position 37 in tRNAs that read codons beginning with uridine. The polypeptide is tRNA-2-methylthio-N(6)-dimethylallyladenosine synthase (Psychrobacter arcticus (strain DSM 17307 / VKM B-2377 / 273-4)).